The following is a 160-amino-acid chain: Nutritionally-regulated adipose and cardiac enriched protein homolog (160 aa).

A disordered region spans residues 1–69 (MRTAAGAVSP…AKPQRTSRRV (69 aa)). 2 stretches are compositionally biased toward basic and acidic residues: residues 12–25 (SRPE…KNEE) and 33–42 (CRAEREDNRK). Residues 101 to 121 (GGSLLLQLCVCVLLVLALGLY) traverse the membrane as a helical segment.

It is found in the cell membrane. In Homo sapiens (Human), this protein is Nutritionally-regulated adipose and cardiac enriched protein homolog (NRAC).